Here is a 349-residue protein sequence, read N- to C-terminus: Guanine nucleotide-binding protein alpha-13 subunit (349 aa).

The N-myristoyl glycine moiety is linked to residue Gly2. Cys3 is lipidated: S-palmitoyl cysteine. Positions Ser35 to Arg349 constitute a G-alpha domain. The segment at Arg38 to Thr51 is G1 motif. GTP is bound by residues Gly43–Thr50, Ile177–Thr183, Asp202–Gln206, Asn271–Asp274, and Ala327. The tract at residues Asp175–Thr183 is G2 motif. Thr183 contributes to the Mg(2+) binding site. A G3 motif region spans residues Phe198 to Lys207. A G4 motif region spans residues Tyr267–Asp274. The interval Cys325–Thr330 is G5 motif.

The protein belongs to the G-alpha family. G proteins are composed of 3 units; alpha, beta and gamma. The alpha chain contains the guanine nucleotide binding site.

Its function is as follows. Guanine nucleotide-binding proteins (G proteins) are involved as modulators or transducers in various transmembrane signaling systems. The sequence is that of Guanine nucleotide-binding protein alpha-13 subunit from Caenorhabditis briggsae.